The sequence spans 348 residues: Outer membrane protein assembly factor BamC (348 aa).

Positions 1–19 (MKYSHQLVIGSLAVFVLTA) are cleaved as a signal peptide. Residue cysteine 20 is the site of N-palmitoyl cysteine attachment. Residue cysteine 20 is the site of S-diacylglycerol cysteine attachment.

Belongs to the BamC family. Part of the Bam complex.

The protein resides in the cell outer membrane. Functionally, part of the outer membrane protein assembly complex, which is involved in assembly and insertion of beta-barrel proteins into the outer membrane. This chain is Outer membrane protein assembly factor BamC, found in Vibrio atlanticus (strain LGP32) (Vibrio splendidus (strain Mel32)).